Reading from the N-terminus, the 223-residue chain is Phosphoribosylformylglycinamidine synthase subunit PurQ (223 aa).

In terms of domain architecture, Glutamine amidotransferase type-1 spans 4-223; sequence FAVIVFPGTN…FKSIVEWMKK (220 aa). The active-site Nucleophile is C85. Catalysis depends on residues H196 and E198.

As to quaternary structure, part of the FGAM synthase complex composed of 1 PurL, 1 PurQ and 2 PurS subunits.

The protein resides in the cytoplasm. It catalyses the reaction N(2)-formyl-N(1)-(5-phospho-beta-D-ribosyl)glycinamide + L-glutamine + ATP + H2O = 2-formamido-N(1)-(5-O-phospho-beta-D-ribosyl)acetamidine + L-glutamate + ADP + phosphate + H(+). It carries out the reaction L-glutamine + H2O = L-glutamate + NH4(+). It participates in purine metabolism; IMP biosynthesis via de novo pathway; 5-amino-1-(5-phospho-D-ribosyl)imidazole from N(2)-formyl-N(1)-(5-phospho-D-ribosyl)glycinamide: step 1/2. Its function is as follows. Part of the phosphoribosylformylglycinamidine synthase complex involved in the purines biosynthetic pathway. Catalyzes the ATP-dependent conversion of formylglycinamide ribonucleotide (FGAR) and glutamine to yield formylglycinamidine ribonucleotide (FGAM) and glutamate. The FGAM synthase complex is composed of three subunits. PurQ produces an ammonia molecule by converting glutamine to glutamate. PurL transfers the ammonia molecule to FGAR to form FGAM in an ATP-dependent manner. PurS interacts with PurQ and PurL and is thought to assist in the transfer of the ammonia molecule from PurQ to PurL. The sequence is that of Phosphoribosylformylglycinamidine synthase subunit PurQ from Pyrococcus horikoshii (strain ATCC 700860 / DSM 12428 / JCM 9974 / NBRC 100139 / OT-3).